We begin with the raw amino-acid sequence, 272 residues long: 2-dehydro-3-deoxyphosphooctonate aldolase (272 aa).

Belongs to the KdsA family.

The protein localises to the cytoplasm. The catalysed reaction is D-arabinose 5-phosphate + phosphoenolpyruvate + H2O = 3-deoxy-alpha-D-manno-2-octulosonate-8-phosphate + phosphate. It participates in carbohydrate biosynthesis; 3-deoxy-D-manno-octulosonate biosynthesis; 3-deoxy-D-manno-octulosonate from D-ribulose 5-phosphate: step 2/3. It functions in the pathway bacterial outer membrane biogenesis; lipopolysaccharide biosynthesis. The polypeptide is 2-dehydro-3-deoxyphosphooctonate aldolase (Pelobacter propionicus (strain DSM 2379 / NBRC 103807 / OttBd1)).